We begin with the raw amino-acid sequence, 316 residues long: Zinc finger protein 367 (316 aa).

Residues 61–97 (VTLGPGSGSGAASPTRTSSSPAEADPLSCPEHLKDGI) form a disordered region. Over residues 70–82 (GAASPTRTSSSPA) the composition is skewed to low complexity. 2 consecutive C2H2-type zinc fingers follow at residues 121–143 (IRCN…KRTH) and 149–173 (YLCD…QRLH). The interval 234 to 294 (QTREQRSPVP…GGVVTARRRL (61 aa)) is disordered. The span at 255 to 278 (EDQEQQDPLDFLPSDEGEEEEQEE) shows a compositional bias: acidic residues. A coiled-coil region spans residues 289–313 (TARRRLQEQRERLHGALALIELANN).

The protein belongs to the krueppel C2H2-type zinc-finger protein family.

The protein resides in the nucleus. Functionally, transcriptional activator. In Danio rerio (Zebrafish), this protein is Zinc finger protein 367 (znf367).